We begin with the raw amino-acid sequence, 130 residues long: Small ribosomal subunit protein uS9 (130 aa).

Belongs to the universal ribosomal protein uS9 family.

The protein is Small ribosomal subunit protein uS9 of Serratia proteamaculans (strain 568).